A 1349-amino-acid polypeptide reads, in one-letter code: Serine/threonine-protein kinase GIN4 (1349 aa).

The span at 1-20 (MPHSRQPSISSSIMSQSNHN) shows a compositional bias: low complexity. Residues 1 to 30 (MPHSRQPSISSSIMSQSNHNHPQKIGPWKL) form a disordered region. Residues serine 10, serine 11, serine 12, and serine 15 each carry the phosphoserine modification. The Protein kinase domain occupies 28-288 (WKLGKTLGRG…TEKILRHPLL (261 aa)). ATP contacts are provided by residues 34 to 42 (LGRGATGRV) and lysine 57. Threonine 69 carries the post-translational modification Phosphothreonine. Catalysis depends on aspartate 158, which acts as the Proton acceptor. Threonine 191 bears the Phosphothreonine mark. A phosphoserine mark is found at serine 294, serine 300, and serine 303. Disordered regions lie at residues 366-498 (QEDN…KAKP) and 510-532 (SNFSLPPSLPPSLPSKDSRYMID). Residues 369 to 384 (NTNNNSPKKSTSFNNK) are compositionally biased toward low complexity. A phosphoserine mark is found at serine 388, serine 390, and serine 393. Position 397 is a phosphothreonine (threonine 397). 2 stretches are compositionally biased toward polar residues: residues 406–418 (ISVSRPTSFQYKS) and 426–442 (ANRNSVARHSVASSANN). Phosphoserine is present on residues serine 407 and serine 409. Threonine 412 is subject to Phosphothreonine. Serine 413 is modified (phosphoserine). Residues 443-470 (SPRKSPYKSPYRSPYRSPYKSPSKRYSY) are compositionally biased toward low complexity. Serine 455, serine 469, serine 473, serine 477, and serine 485 each carry phosphoserine. Over residues 471-488 (NQSPTKSPYGRRSNSQRQ) the composition is skewed to polar residues. Serine 556 bears the Phosphoserine mark. Residues 570–585 (RNSIIGKNNNNSNSNK) show a composition bias toward low complexity. Positions 570–593 (RNSIIGKNNNNSNSNKRMSKRKSI) are disordered. Serine 634 is subject to Phosphoserine. A coiled-coil region spans residues 661–701 (EEKEAKEYERLMELERKKHEAELKARRELEKKKRRQKRRSI). Residues 712–737 (KNDADPNNSEQELVDEGIKQPKRQSK) are disordered. 2 positions are modified to phosphoserine: serine 720 and serine 746. The disordered stretch occupies residues 756 to 798 (TLEDVENLKRRSASQPVPKRRQTPVLTRRPVSRLDPLWQAHEN). Residues threonine 778, threonine 869, and threonine 876 each carry the phosphothreonine modification. Serine 891 bears the Phosphoserine mark. A Phosphothreonine modification is found at threonine 941. Serine 973 carries the phosphoserine modification. Phosphothreonine occurs at positions 990 and 992. A Phosphoserine modification is found at serine 999. The tract at residues 1011–1229 (RTSYYDGSGK…AESKEEKPKS (219 aa)) is disordered. Residues 1024-1040 (RASTTKRYNVHSSSGQR) are compositionally biased toward polar residues. The segment covering 1044–1053 (KVPDLPKNDY) has biased composition (basic and acidic residues). Threonine 1056 is modified (phosphothreonine). Phosphoserine is present on residues serine 1059, serine 1074, serine 1077, serine 1078, serine 1080, and serine 1094. Basic and acidic residues predominate over residues 1083–1094 (VFDKIKLPDGKS). Threonine 1095 bears the Phosphothreonine mark. Phosphoserine is present on residues serine 1097 and serine 1098. Threonine 1106 carries the post-translational modification Phosphothreonine. Positions 1134-1149 (IESSQPMSKVRGNNSS) are enriched in polar residues. At serine 1154 the chain carries Phosphoserine. Over residues 1202–1215 (NNTNAATNTTTQQQ) the composition is skewed to low complexity. At serine 1218 the chain carries Phosphoserine.

It belongs to the protein kinase superfamily. CAMK Ser/Thr protein kinase family. NIM1 subfamily. In terms of assembly, associates with the septin complex which consists of CDC3, CDC10, CDC11, CDC12, and SEP7. Post-translationally, hyperphosphorylated during mitosis at dozens of sites. Among these, 7 have perfect or minimal CDK consensus sites and are CDC28 targets.

Its subcellular location is the cytoplasm. It localises to the bud neck. The catalysed reaction is L-seryl-[protein] + ATP = O-phospho-L-seryl-[protein] + ADP + H(+). It carries out the reaction L-threonyl-[protein] + ATP = O-phospho-L-threonyl-[protein] + ADP + H(+). Functionally, serine/threonine-protein kinase which regulates the localization and the function of the septins during mitosis. Involved in the formation of the septin ring but not the basal septin band. Phosphorylates septins CDC11 and SEP7. Required for the transition from pseudohyphae to hyphae. Acts upstream of IRS4 and INP51 in regulating cell wall integrity responses. Involved in propolis-induced cell death. In Candida albicans (strain SC5314 / ATCC MYA-2876) (Yeast), this protein is Serine/threonine-protein kinase GIN4 (GIN4).